The chain runs to 217 residues: MAIVSSARESLSHAMNNRFLPNLEYLLQGSILDSAVEHLMHRLKGLCDNVDTSPEPFHDLEVCMSLRQPNANQPLLLRVRRALGRDAPFQMRYLGNPEVDLRRPTLVRSCMDCACTNGILEFLTEMGFRLEFEYIAKGYMFRKGRMKITVSKLIKIVPGKQQDMANEPISQSYIVELSVVAPTGQENVGEEMRVFAEQLKPLVQLEKIDYKRLGGMP.

The protein belongs to the Mediator complex subunit 18 family. In terms of assembly, component of the Mediator complex, which includes at least CDK8, MED4, MED6, MED11, MED14, MED17, MED18, MED20, MED21, MED22, MED27, MED28, MED30 and MED31.

The protein localises to the nucleus. Its function is as follows. Component of the Mediator complex, a coactivator involved in the regulated transcription of nearly all RNA polymerase II-dependent genes. Mediator functions as a bridge to convey information from gene-specific regulatory proteins to the basal RNA polymerase II transcription machinery. Mediator is recruited to promoters by direct interactions with regulatory proteins and serves as a scaffold for the assembly of a functional preinitiation complex with RNA polymerase II and the general transcription factors. This chain is Mediator of RNA polymerase II transcription subunit 18 (MED18), found in Drosophila melanogaster (Fruit fly).